The primary structure comprises 366 residues: Protein U1 (366 aa).

The protein belongs to the herpesviridae US22 family.

The polypeptide is Protein U1 (U1) (Human herpesvirus 6A (strain Uganda-1102) (HHV-6 variant A)).